We begin with the raw amino-acid sequence, 277 residues long: tRNA U34 carboxymethyltransferase (277 aa).

Carboxy-S-adenosyl-L-methionine is bound by residues K46, W60, K65, G84, 106–108, 133–134, Y153, and R268; these read DPS and VE.

The protein belongs to the class I-like SAM-binding methyltransferase superfamily. CmoB family. Homotetramer.

It carries out the reaction carboxy-S-adenosyl-L-methionine + 5-hydroxyuridine(34) in tRNA = 5-carboxymethoxyuridine(34) in tRNA + S-adenosyl-L-homocysteine + H(+). Catalyzes carboxymethyl transfer from carboxy-S-adenosyl-L-methionine (Cx-SAM) to 5-hydroxyuridine (ho5U) to form 5-carboxymethoxyuridine (cmo5U) at position 34 in tRNAs. This chain is tRNA U34 carboxymethyltransferase, found in Wolinella succinogenes (strain ATCC 29543 / DSM 1740 / CCUG 13145 / JCM 31913 / LMG 7466 / NCTC 11488 / FDC 602W) (Vibrio succinogenes).